Reading from the N-terminus, the 444-residue chain is MREIVHIQAGQCGNQIGAKFWEVISDEHGVDPTGTYHGDSDLQLERINVYFNEATGRKICPRAMLMDLEPGTMDSVRAGPFGQLFRPDNFVFGQSGAGNNWAKGHYTEGAELIDSVLDVVRKEAEGCDCLQGFQITHSLGGGTGSGMGTLLISKIREKYPDRIMETFSVFPSPKVSDTVVEPYNATLSVHQLVENADEVMCIDNEALYDICFRTLKPTTPTYGDLNHLVSAVISGVTSCLRFPGQLNSDLRKLAVNLIPFPRLHFFMIGFAPLTSRGSQQYRALTVPELTQQMFDAKNMMCASDPRHGRYLTASAMFRGRMSTKEVDEQMLNVQNKNSSYFVEWIPNNIKSSVCDIPPKGLKMSSTFIGNSTAIQEMFKRVAEQFTAMFRRKAFLHWYTGEGMDEMEFTEAESNMNDLVSEYQQYQDATAEEEGEFDDEEEMDV.

GTP is bound by residues Gln-11, Glu-69, Ser-138, Gly-142, Thr-143, Gly-144, Asn-204, and Asn-226. Glu-69 contributes to the Mg(2+) binding site. Residues 423–444 (QQYQDATAEEEGEFDDEEEMDV) form a disordered region. A compositionally biased stretch (acidic residues) spans 429 to 444 (TAEEEGEFDDEEEMDV).

Belongs to the tubulin family. Dimer of alpha and beta chains. A typical microtubule is a hollow water-filled tube with an outer diameter of 25 nm and an inner diameter of 15 nM. Alpha-beta heterodimers associate head-to-tail to form protofilaments running lengthwise along the microtubule wall with the beta-tubulin subunit facing the microtubule plus end conferring a structural polarity. Microtubules usually have 13 protofilaments but different protofilament numbers can be found in some organisms and specialized cells. The cofactor is Mg(2+).

It is found in the cytoplasm. It localises to the cytoskeleton. In terms of biological role, tubulin is the major constituent of microtubules, a cylinder consisting of laterally associated linear protofilaments composed of alpha- and beta-tubulin heterodimers. Microtubules grow by the addition of GTP-tubulin dimers to the microtubule end, where a stabilizing cap forms. Below the cap, tubulin dimers are in GDP-bound state, owing to GTPase activity of alpha-tubulin. This is Tubulin beta chain from Euplotes focardii.